The primary structure comprises 1342 residues: DNA-directed RNA polymerase subunit beta (1342 aa).

The protein belongs to the RNA polymerase beta chain family. As to quaternary structure, the RNAP catalytic core consists of 2 alpha, 1 beta, 1 beta' and 1 omega subunit. When a sigma factor is associated with the core the holoenzyme is formed, which can initiate transcription.

The enzyme catalyses RNA(n) + a ribonucleoside 5'-triphosphate = RNA(n+1) + diphosphate. DNA-dependent RNA polymerase catalyzes the transcription of DNA into RNA using the four ribonucleoside triphosphates as substrates. This Buchnera aphidicola subsp. Schizaphis graminum (strain Sg) protein is DNA-directed RNA polymerase subunit beta.